The chain runs to 297 residues: Elongation factor Ts (297 aa).

Residues 82 to 85 (TDFV) are involved in Mg(2+) ion dislocation from EF-Tu.

The protein belongs to the EF-Ts family.

Its subcellular location is the cytoplasm. Functionally, associates with the EF-Tu.GDP complex and induces the exchange of GDP to GTP. It remains bound to the aminoacyl-tRNA.EF-Tu.GTP complex up to the GTP hydrolysis stage on the ribosome. This chain is Elongation factor Ts, found in Azoarcus sp. (strain BH72).